The following is a 1636-amino-acid chain: MAMNTGGFDSMQRQLEAELRSLSSESKRRNSTIRHASDKSIEILKRVHSFEELERHPDFALPFVLACQSRNAKMTTLAMQCLQGLSTVPSIPRSRLSEILDAFIEATHLAMEIQLKVLQVVPIFFKTYGKFIYGPLCKKLLLCCSNLLHVPNKAPVVVGTASATLQQLIDEIFDRLSIESVVDDKQYEVLISNSESIKVNVYRYDANKLFDNICSLNEISSNGAVSDEEMLLDIGDIPIDYGLEILESILKNSQKNLLECQDLQYLLRVKAIPLLLRCISSSRHFSTAVRSCRCLKLLIRKEYLSILELELEVILSLLIHGISVESNLSGWQRVLSLELFKDLSQDPEIVNTLYMDYDNYPDKKHVFKYLLKECIVLLNSPEYITFLAPSKVVEKMDSPLITTENSTVKTKFMHLLDKSNAPSINITYIISLILTICNHLCEGLNKSALESSPLEKKIEDKEREEGTGNDSTVVKVYSGLFSGLFELNKLFLYSTSLETSIFHLVVRAFQKLAHSAGVLSLKDKLRACMKLFSILITNNVTSSNQYSFNDTSKSAKNQHTRNISTSSVTTSPVESTKNPSRSIADSAQNKEMKRRLHPRNISSRQVSLLRALISLSISLGPIFDSESWRYTFLTWQWITYYIYGPSADFKESFYSEDIPPPPILTKSDVTSIESSLTKFFESTSSYSCSTFHLVLTRLILDSKNTLTLEQTNLNLNNDIGYHPLDAKDEIIPCIYNKAFFVNKIGELATYNCKKFLFGKNGKELWSLISTYMIKLISNREMDNDSLRLYTVRVFTDIIKKATNEVGNSDEQDNKVKQFGTLENLVIDSLMATINSIKQLDIGKQEIYNGTINVESDILFQLLLTLKEILNEFGELLMNSWTNIFNIINSPFEWTVEDTDFSVNEDIDDSSLFEGIVQKHKNMIQVSYDVFKLISDDFLQSLPMSVIKFVIDTLVNFVSQKRNLNISFSSISQFWLVGDYLRVRFNPETLNLSDEKRRSLSEKINNQKLIEIITSSSSHDWELYNGLWIYLLKNLINCTNDDRVEVKNGAVQTFFRIIDSHSVCFPPWDLIFLEVIEPLLTKEWSTEELENETDFINVTLQGLIKLYPEHFKDFKNNTTCAKEWSMLLDFLKRLLSSTSNNTKNAVILNYQTLLKEIITIEDVPSDILKKCCEIFTDYNITYSDLSTNASSKTEYDCIYELITGFPPLYQLISKYDAMTDEFVEKVLLLFNSAIKYPLLPEFVQDKTKPSSMQKAILSGLDIFMTNDSKDTEILILLQLSTISILAFDTREKITKKLGPKLPKASLNRLPTFEAISYMSCSNLRNRIAKIDQFGISTLKAKHILRILKNLAEIIKRKSLITGSESDEIPIWVLASNCFCDLSNKIFKSLQEDAENPLKDNFCDLFINVIVVTLQRINPELDNLTEIDDLNEYSKYREILLENRIIDLFNERQLDTFIYAVWDCSFLYEFDELENALMQDCGTFSELSQKLSSFDFSCIFGSTTNPRFQTKYKCSLECLQDLVNFMLNTNEKLRKLTAPYLSARIALALRRYISDEYLIGRAPIPKLRKTELATLLNGLCVILRGVLDQNSTLGNKQIGVENLQTLSPLILRTIPVSHKMDGLQDKVLELSLGFTKLD.

Ala2 bears the N-acetylalanine mark. The segment at 60 to 410 (ALPFVLACQS…ITTENSTVKT (351 aa)) is golgi membrane targeting and interaction with ARL1. Over residues 547–563 (SFNDTSKSAKNQHTRNI) the composition is skewed to polar residues. The interval 547 to 596 (SFNDTSKSAKNQHTRNISTSSVTTSPVESTKNPSRSIADSAQNKEMKRRL) is disordered. Phosphoserine is present on residues Ser564, Ser567, and Ser571. Positions 564 to 576 (STSSVTTSPVEST) are enriched in low complexity. The span at 577–589 (KNPSRSIADSAQN) shows a compositional bias: polar residues. The segment at 1501–1636 (TTNPRFQTKY…ELSLGFTKLD (136 aa)) is required for function in membrane trafficking.

This sequence belongs to the MON2 family. As to quaternary structure, homodimer. Interacts with DOP1. Interacts with ARL1. Interacts with NEO1.

It is found in the golgi apparatus membrane. In terms of biological role, required for traffic between late Golgi and early endosomes. Required for endocytosis and maintenance of vacuolar structure. This is Protein MON2 (MON2) from Saccharomyces cerevisiae (strain ATCC 204508 / S288c) (Baker's yeast).